We begin with the raw amino-acid sequence, 260 residues long: Indole-3-glycerol phosphate synthase (260 aa).

The protein belongs to the TrpC family.

The enzyme catalyses 1-(2-carboxyphenylamino)-1-deoxy-D-ribulose 5-phosphate + H(+) = (1S,2R)-1-C-(indol-3-yl)glycerol 3-phosphate + CO2 + H2O. Its pathway is amino-acid biosynthesis; L-tryptophan biosynthesis; L-tryptophan from chorismate: step 4/5. The sequence is that of Indole-3-glycerol phosphate synthase from Staphylococcus aureus (strain COL).